Here is a 212-residue protein sequence, read N- to C-terminus: Large ribosomal subunit protein uL3 (212 aa).

A disordered region spans residues 117–142 (TSKGKGFQGNIKRHNQSRGPMTHGSR).

The protein belongs to the universal ribosomal protein uL3 family. Part of the 50S ribosomal subunit. Forms a cluster with proteins L14 and L19.

One of the primary rRNA binding proteins, it binds directly near the 3'-end of the 23S rRNA, where it nucleates assembly of the 50S subunit. The chain is Large ribosomal subunit protein uL3 from Acholeplasma laidlawii (strain PG-8A).